Here is a 98-residue protein sequence, read N- to C-terminus: NADH-ubiquinone oxidoreductase chain 4L (98 aa).

3 helical membrane passes run 1–21 (MSLI…GLLM), 29–49 (ALLC…LTIL), and 61–81 (IILL…LVMI).

The protein belongs to the complex I subunit 4L family. In terms of assembly, core subunit of respiratory chain NADH dehydrogenase (Complex I) which is composed of 45 different subunits.

It is found in the mitochondrion inner membrane. It catalyses the reaction a ubiquinone + NADH + 5 H(+)(in) = a ubiquinol + NAD(+) + 4 H(+)(out). Core subunit of the mitochondrial membrane respiratory chain NADH dehydrogenase (Complex I) which catalyzes electron transfer from NADH through the respiratory chain, using ubiquinone as an electron acceptor. Part of the enzyme membrane arm which is embedded in the lipid bilayer and involved in proton translocation. The polypeptide is NADH-ubiquinone oxidoreductase chain 4L (MT-ND4L) (Platanista minor (Indus river dolphin)).